We begin with the raw amino-acid sequence, 367 residues long: Quinolinate synthase (367 aa).

The iminosuccinate site is built by histidine 45 and serine 62. Cysteine 109 provides a ligand contact to [4Fe-4S] cluster. Residues 140-142 (YVN) and serine 161 contribute to the iminosuccinate site. Cysteine 229 is a binding site for [4Fe-4S] cluster. Iminosuccinate contacts are provided by residues 255–257 (HPE) and threonine 272. Cysteine 319 is a binding site for [4Fe-4S] cluster.

Belongs to the quinolinate synthase family. Type 3 subfamily. [4Fe-4S] cluster serves as cofactor.

The protein localises to the cytoplasm. The enzyme catalyses iminosuccinate + dihydroxyacetone phosphate = quinolinate + phosphate + 2 H2O + H(+). It functions in the pathway cofactor biosynthesis; NAD(+) biosynthesis; quinolinate from iminoaspartate: step 1/1. Catalyzes the condensation of iminoaspartate with dihydroxyacetone phosphate to form quinolinate. The sequence is that of Quinolinate synthase from Lysinibacillus sphaericus (strain C3-41).